The chain runs to 382 residues: Probable cytosolic iron-sulfur protein assembly protein 1 (382 aa).

WD repeat units follow at residues 9–48, 55–107, 138–178, 185–224, 231–278, 303–342, and 349–382; these read AHHD…KFPR, THTR…DNDE, GHEH…EEFE, EHQQ…DDWG, GHQG…SETN, AHTY…WEIE, and HGVH…NVWE.

This sequence belongs to the WD repeat CIA1 family. In terms of assembly, interacts with NAR1.

It is found in the cytoplasm. The protein localises to the nucleus. Its function is as follows. Essential component of the cytosolic iron-sulfur (Fe/S) protein assembly machinery. Required for the maturation of extramitochondrial Fe/S proteins. This is Probable cytosolic iron-sulfur protein assembly protein 1 from Meyerozyma guilliermondii (strain ATCC 6260 / CBS 566 / DSM 6381 / JCM 1539 / NBRC 10279 / NRRL Y-324) (Yeast).